We begin with the raw amino-acid sequence, 376 residues long: MEQKQRRFTKNVFVLDQKRKTICGQIAARQSLPYCQIKIGRNFALRAVATPEPKGYVLEICDVGAYRIQDGNDVISLMISADGVEGTQERWEEWKFESDLMRTNGHSSKYKRSVGRREIKVSKGMGIVPPYTRNDFDRRELPELPGVQRSKYDIRELRQKIREEREKGAVEQPHKPAFKTERGMNRPDSDEDQNPAGGVVNDWTCETQKRDQEAERREALEIRLADNDRESKHSNWIVRGRGKILKEVKNSFRTQEVERKKSDMGEVIIEEDDEDSEEEEGARASYITSAYIERISRIRKIKDERLSMLASMMPQQSGEYTTTLFIKKQKWDNVPLYLIDEMQKKYELQSVGSCERVAFVSKGTNLIILPVASNPR.

The span at 163–188 (EEREKGAVEQPHKPAFKTERGMNRPD) shows a compositional bias: basic and acidic residues. The tract at residues 163–201 (EEREKGAVEQPHKPAFKTERGMNRPDSDEDQNPAGGVVN) is disordered.

Belongs to the orbivirus non-structural protein NS2 family.

Its function is as follows. Single-stranded RNA-binding protein. The chain is Non-structural protein NS2 (Segment-8) from Antilocapra americana (Pronghorn).